We begin with the raw amino-acid sequence, 359 residues long: MMP endo-(1,4)-3-O-methyl-alpha-D-mannosidase (359 aa).

Monomer in solution.

The catalysed reaction is Endohydrolysis of 3-O-methyl-alpha-D-mannosyl-(1-&gt;4)-3-O-methyl-D-mannose linkages within (1,4)-3-O-methyl-alpha-D-mannnan substrates.. Functionally, hydrolase involved in the biosynthesis of 3-O-methylmannose polysaccharides (MMP), which are intracellular polymethylated polysaccharides implicated in the modulation of fatty acid metabolism in non-tuberculous mycobacteria. Highly specific hydrolase that catalyzes the internal cleavage of MMP. Is able to hydrolyze purified MMP into distinct lower order oligomannosides but does not cleave acylated or deacylated forms of 6-O-methylglucose lipopolysaccharide (MGLP), beta-mannans, synthetic 4alpha-oligomannosides or its own reaction products. Products were identified as four distinct oligomannosides differing in the number of mannose units (4 to 8) and methylation pattern (free or methylated C1-OH). Might serve as a recycling enzyme that hydrolyzes mature MMP into defined-size smaller oligomannosides that are, in turn, substrates for ManT and MeT1 activities for further processing into new daughter MMP chains. This chain is MMP endo-(1,4)-3-O-methyl-alpha-D-mannosidase, found in Mycolicibacterium hassiacum (strain DSM 44199 / CIP 105218 / JCM 12690 / 3849) (Mycobacterium hassiacum).